The chain runs to 127 residues: Large ribosomal subunit protein bL20 (127 aa).

Belongs to the bacterial ribosomal protein bL20 family.

In terms of biological role, binds directly to 23S ribosomal RNA and is necessary for the in vitro assembly process of the 50S ribosomal subunit. It is not involved in the protein synthesizing functions of that subunit. The sequence is that of Large ribosomal subunit protein bL20 from Renibacterium salmoninarum (strain ATCC 33209 / DSM 20767 / JCM 11484 / NBRC 15589 / NCIMB 2235).